The sequence spans 361 residues: Peptide chain release factor 1 (361 aa).

Gln238 carries the post-translational modification N5-methylglutamine.

This sequence belongs to the prokaryotic/mitochondrial release factor family. Methylated by PrmC. Methylation increases the termination efficiency of RF1.

The protein resides in the cytoplasm. In terms of biological role, peptide chain release factor 1 directs the termination of translation in response to the peptide chain termination codons UAG and UAA. The polypeptide is Peptide chain release factor 1 (Mesomycoplasma hyopneumoniae (strain 232) (Mycoplasma hyopneumoniae)).